Consider the following 430-residue polypeptide: Trigger factor (430 aa).

Positions 163 to 248 (GNIAIIDFKG…VKEIKVKEIP (86 aa)) constitute a PPIase FKBP-type domain.

It belongs to the FKBP-type PPIase family. Tig subfamily.

It is found in the cytoplasm. The catalysed reaction is [protein]-peptidylproline (omega=180) = [protein]-peptidylproline (omega=0). Its function is as follows. Involved in protein export. Acts as a chaperone by maintaining the newly synthesized protein in an open conformation. Functions as a peptidyl-prolyl cis-trans isomerase. The protein is Trigger factor of Clostridium kluyveri (strain NBRC 12016).